Here is a 117-residue protein sequence, read N- to C-terminus: Large-conductance mechanosensitive channel (117 aa).

3 helical membrane passes run 7–27 (EFAL…GAAF), 30–50 (IVTA…FGTV), and 64–84 (GMFV…FIFV).

Belongs to the MscL family. As to quaternary structure, homopentamer.

The protein resides in the cell membrane. Channel that opens in response to stretch forces in the membrane lipid bilayer. May participate in the regulation of osmotic pressure changes within the cell. The protein is Large-conductance mechanosensitive channel of Staphylococcus saprophyticus subsp. saprophyticus (strain ATCC 15305 / DSM 20229 / NCIMB 8711 / NCTC 7292 / S-41).